The following is a 588-amino-acid chain: Putative pentatricopeptide repeat-containing protein At5g52630 (588 aa).

11 PPR repeats span residues 14 to 48 (NYNQ…GLSL), 49 to 79 (IPLV…SPQK), 80 to 114 (SSTT…NLRP), 115 to 149 (DDHV…GYDA), 150 to 180 (DVFV…MPQR), 181 to 215 (NVVT…NLAV), 216 to 250 (NDYS…SFDS), 251 to 281 (SSFV…VPVK), 282 to 316 (NLGI…GMKP), 317 to 351 (NFIT…RIEP), and 352 to 386 (TDKH…PTES). The segment at 387–462 (VWGALLTSCT…ETGLSWVEER (76 aa)) is type E motif. The tract at residues 463 to 493 (NKVHTFAAGERRHEKSKEIYEKLAELGEEME) is type E(+) motif. The segment at 494–588 (KAGYIADTSY…DGKCSCNDYW (95 aa)) is type DYW motif.

Belongs to the PPR family. PCMP-H subfamily.

The chain is Putative pentatricopeptide repeat-containing protein At5g52630 (PCMP-H52) from Arabidopsis thaliana (Mouse-ear cress).